The following is a 694-amino-acid chain: Follicle-stimulating hormone receptor (694 aa).

An N-terminal signal peptide occupies residues 1–17 (MALLLVSLLAFLSLGSG). 2 cysteine pairs are disulfide-bonded: cysteine 18-cysteine 25 and cysteine 23-cysteine 32. One can recognise an LRRNT domain in the interval 18-46 (CHHRVCHCSNRVFLCQESKVTEIPSDLPR). Residues 18-365 (CHHRVCHCSN…EDIMGYDILR (348 aa)) are Extracellular-facing. LRR repeat units lie at residues 49–72 (LELR…FGDL), 73–97 (EKIE…LPKL), 98–118 (HEIR…AFQN), 119–143 (LPNL…KIQS), 144–169 (LQKV…MGLS), 170–192 (FEST…AFNG), 193–216 (TQLD…VFQG), 217–240 (ASGP…GLEN), and 241–259 (LKKL…PSLE). Residues asparagine 191 and asparagine 199 are each glycosylated (N-linked (GlcNAc...) asparagine). N-linked (GlcNAc...) asparagine glycosylation is present at asparagine 268. Intrachain disulfides connect cysteine 275–cysteine 345, cysteine 276–cysteine 292, cysteine 276–cysteine 355, and cysteine 292–cysteine 337. A glycan (N-linked (GlcNAc...) asparagine) is linked at asparagine 293. A Sulfotyrosine modification is found at tyrosine 334. A helical membrane pass occupies residues 366 to 386 (VLIWFISILAITGNIIVLVIL). Residues 387-397 (ITSQYKLTVPR) lie on the Cytoplasmic side of the membrane. A helical membrane pass occupies residues 398–420 (FLMCNLAFADLCIGIYLLLIASV). At 421–442 (DIHTKSQYHNYAIDWQTGAGCD) the chain is on the extracellular side. Cysteine 441 and cysteine 516 are joined by a disulfide. Residues 443–464 (AAGFFTVFASELSVYTLTAITL) traverse the membrane as a helical segment. Residues 465–484 (ERWHTITHAMQLECKVQLRH) are Cytoplasmic-facing. A helical transmembrane segment spans residues 485-507 (AASVMLVGWIFAFAVALLPIFGI). Residues 508–527 (STYMKVSICLPMDIDSPLSQ) are Extracellular-facing. The helical transmembrane segment at 528-549 (LYVMSLLVLNVLAFVVICGCYI) threads the bilayer. Residues 550–572 (HIYLTVRNPNIVSSSSDTKIAKR) lie on the Cytoplasmic side of the membrane. Residues 573–596 (MAILIFTDFLCMAPISFFAISASL) form a helical membrane-spanning segment. Over 597-607 (KVPLITVSKSK) the chain is Extracellular. Residues 608–629 (ILLVLFYPINSCANPFLYAIFT) form a helical membrane-spanning segment. At 630–694 (KNFRRDFFIL…LVPLSHLAQN (65 aa)) the chain is on the cytoplasmic side.

It belongs to the G-protein coupled receptor 1 family. FSH/LSH/TSH subfamily. As to quaternary structure, homotrimer. Functions as a homotrimer binding the FSH hormone heterodimer composed of CGA and FSHB. Interacts with ARRB2. Interacts with APPL2; interaction is independent of follicle stimulating hormone stimulation. N-glycosylated; indirectly required for FSH-binding, possibly via a conformational change that allows high affinity binding of hormone. Post-translationally, sulfated.

Its subcellular location is the cell membrane. G protein-coupled receptor for follitropin, the follicle-stimulating hormone. Through cAMP production activates the downstream PI3K-AKT and ERK1/ERK2 signaling pathways. This is Follicle-stimulating hormone receptor (FSHR) from Equus caballus (Horse).